We begin with the raw amino-acid sequence, 147 residues long: Protein-export protein SecB 2 (147 aa).

Belongs to the SecB family. As to quaternary structure, homotetramer, a dimer of dimers. One homotetramer interacts with 1 SecA dimer.

It localises to the cytoplasm. One of the proteins required for the normal export of preproteins out of the cell cytoplasm. It is a molecular chaperone that binds to a subset of precursor proteins, maintaining them in a translocation-competent state. It also specifically binds to its receptor SecA. The protein is Protein-export protein SecB 2 of Francisella tularensis subsp. novicida (strain U112).